Reading from the N-terminus, the 1099-residue chain is Carbamoyl phosphate synthase large chain (1099 aa).

Residues 1–402 are carboxyphosphate synthetic domain; the sequence is MPKREDIKRI…ALGKALRSLE (402 aa). R129, R169, G175, G176, E208, V210, E215, G241, I242, H243, Q285, and E299 together coordinate ATP. One can recognise an ATP-grasp 1 domain in the interval 133 to 328; that stretch reads KETMEKAGLE…IAKVAALLAV (196 aa). Positions 285, 299, and 301 each coordinate Mg(2+). Positions 285, 299, and 301 each coordinate Mn(2+). Residues 403 to 541 are oligomerization domain; the sequence is LDAAPKLDLE…STYNGVENEA (139 aa). Residues 542–944 form a carbamoyl phosphate synthetic domain region; that stretch reads VPSDREKIMI…AFAKAQIAAG (403 aa). One can recognise an ATP-grasp 2 domain in the interval 666 to 857; sequence AKLLKQIGLK…VARIAAKIMV (192 aa). Residues R702, K741, L743, E748, G773, V774, H775, S776, Q816, and E828 each contribute to the ATP site. Mg(2+) is bound by residues Q816, E828, and N830. Residues Q816, E828, and N830 each contribute to the Mn(2+) site. The MGS-like domain maps to 945–1099; that stretch reads NPLPTTGAIL…VRRLTDTWKM (155 aa). Residues 945–1099 form an allosteric domain region; it reads NPLPTTGAIL…VRRLTDTWKM (155 aa).

This sequence belongs to the CarB family. In terms of assembly, composed of two chains; the small (or glutamine) chain promotes the hydrolysis of glutamine to ammonia, which is used by the large (or ammonia) chain to synthesize carbamoyl phosphate. Tetramer of heterodimers (alpha,beta)4. The cofactor is Mg(2+). Mn(2+) serves as cofactor.

The enzyme catalyses hydrogencarbonate + L-glutamine + 2 ATP + H2O = carbamoyl phosphate + L-glutamate + 2 ADP + phosphate + 2 H(+). It catalyses the reaction hydrogencarbonate + NH4(+) + 2 ATP = carbamoyl phosphate + 2 ADP + phosphate + 2 H(+). It participates in amino-acid biosynthesis; L-arginine biosynthesis; carbamoyl phosphate from bicarbonate: step 1/1. Its pathway is pyrimidine metabolism; UMP biosynthesis via de novo pathway; (S)-dihydroorotate from bicarbonate: step 1/3. Its function is as follows. Large subunit of the glutamine-dependent carbamoyl phosphate synthetase (CPSase). CPSase catalyzes the formation of carbamoyl phosphate from the ammonia moiety of glutamine, carbonate, and phosphate donated by ATP, constituting the first step of 2 biosynthetic pathways, one leading to arginine and/or urea and the other to pyrimidine nucleotides. The large subunit (synthetase) binds the substrates ammonia (free or transferred from glutamine from the small subunit), hydrogencarbonate and ATP and carries out an ATP-coupled ligase reaction, activating hydrogencarbonate by forming carboxy phosphate which reacts with ammonia to form carbamoyl phosphate. This chain is Carbamoyl phosphate synthase large chain, found in Thermotoga maritima (strain ATCC 43589 / DSM 3109 / JCM 10099 / NBRC 100826 / MSB8).